A 295-amino-acid chain; its full sequence is UDP-N-acetylenolpyruvoylglucosamine reductase (295 aa).

The FAD-binding PCMH-type domain occupies 26–189 (VGGQADILFK…IEAEFKGVSS (164 aa)). Arginine 169 is a catalytic residue. Cysteine 218 functions as the Proton donor in the catalytic mechanism. Glutamate 288 is a catalytic residue.

The protein belongs to the MurB family. The cofactor is FAD.

It is found in the cytoplasm. The catalysed reaction is UDP-N-acetyl-alpha-D-muramate + NADP(+) = UDP-N-acetyl-3-O-(1-carboxyvinyl)-alpha-D-glucosamine + NADPH + H(+). It functions in the pathway cell wall biogenesis; peptidoglycan biosynthesis. Functionally, cell wall formation. The chain is UDP-N-acetylenolpyruvoylglucosamine reductase from Wolbachia sp. subsp. Brugia malayi (strain TRS).